Here is a 272-residue protein sequence, read N- to C-terminus: Petrobactin import ATP-binding protein FpuC (272 aa).

One can recognise an ABC transporter domain in the interval 2-238 (ISVNKVFYAH…EMFQHIFGIE (237 aa)). 34-41 (GPNGSGKS) serves as a coordination point for ATP.

The protein belongs to the ABC transporter superfamily. The complex is composed of two ATP-binding proteins (FpuC), two transmembrane proteins (FpuB) and a solute-binding protein (FpuA).

The protein localises to the cell membrane. It carries out the reaction a Fe(III)-siderophore(out) + ATP + H2O = a Fe(III)-siderophore(in) + ADP + phosphate + H(+). Part of an ABC transporter complex involved in ferric-petrobactin uptake. Probably responsible for energy coupling to the transport system. In Bacillus anthracis, this protein is Petrobactin import ATP-binding protein FpuC.